We begin with the raw amino-acid sequence, 454 residues long: MFRSQRMKFLELVVLERDVDRVLEYLGKTALVHLRLSAAARGSSSHCAQSKEYVGRLEEACKYLGVSGECAFSPGDSLPTEEDYTLAQQILAEVDALHAREREGDAPSVPRGKSSVAHDSANEEQFQGEKCALGSMRGPALCALLRRFALQERVHRTRDALESTRHTYRIAGWLPAHEAKDLVAGLDNVTTGRMAVRLFEPQELSFIRDGSEHVPVCYQHGRFVRSYERMVSSYGCPPYGLVDPTPFVAFSYALLFGIMFGDLGQGLLFFVLGLLLRTRRVRALNRWAHLDYVFLSVGFSSMVMGFLTGEFFAHGTLLAPLIRSVTALCGGVPRDHILHLMPSHGSLHTLMAFFGFTLFLGFVINSLGLIINIVNQVRLRHALQQCVQKRECADSSFFGTWLPLQCAYHFLEFHSGSLMRLQWACLSWVFFVKSFWSVCASVCVRGFLKVLACI.

The segment at 101–121 (EREGDAPSVPRGKSSVAHDSA) is disordered. The next 4 helical transmembrane spans lie at 254 to 274 (LLFG…VLGL), 293 to 313 (VFLS…EFFA), 351 to 371 (MAFF…GLII), and 424 to 444 (ACLS…SVCV).

It belongs to the V-ATPase 116 kDa subunit family.

The protein resides in the cell membrane. Produces ATP from ADP in the presence of a proton gradient across the membrane. The sequence is that of V-type ATP synthase subunit I 2 (atpI2) from Treponema pallidum (strain Nichols).